The following is a 99-amino-acid chain: Large ribosomal subunit protein uL23cz/uL23cy (99 aa).

The segment at 1–37 (MGGVENPVSTDKAIRLPERKQYSSNAEPNPSKTEVKR) is disordered. Residues 12–21 (KAIRLPERKQ) are compositionally biased toward basic and acidic residues. Polar residues predominate over residues 22–32 (YSSNAEPNPSK).

It belongs to the universal ribosomal protein uL23 family. Part of the 50S ribosomal subunit.

Its subcellular location is the plastid. It is found in the chloroplast. Binds to 23S rRNA. The polypeptide is Large ribosomal subunit protein uL23cz/uL23cy (rpl23-A) (Selaginella uncinata (Blue spike-moss)).